An 82-amino-acid polypeptide reads, in one-letter code: Large ribosomal subunit protein bL31B (82 aa).

Belongs to the bacterial ribosomal protein bL31 family. Type B subfamily. In terms of assembly, part of the 50S ribosomal subunit.

The polypeptide is Large ribosomal subunit protein bL31B (Dichelobacter nodosus (strain VCS1703A)).